A 450-amino-acid polypeptide reads, in one-letter code: Adenylosuccinate lyase (450 aa).

N(6)-(1,2-dicarboxyethyl)-AMP is bound by residues 9–10 (RY), 75–77 (HHD), and 101–102 (TS). H149 functions as the Proton donor/acceptor in the catalytic mechanism. Q223 contacts N(6)-(1,2-dicarboxyethyl)-AMP. Residue S273 is the Proton donor/acceptor of the active site. N(6)-(1,2-dicarboxyethyl)-AMP contacts are provided by residues S274, 279–281 (KRN), and 318–322 (SVERV).

It belongs to the lyase 1 family. Adenylosuccinate lyase subfamily. Homotetramer. Residues from neighboring subunits contribute catalytic and substrate-binding residues to each active site.

It carries out the reaction N(6)-(1,2-dicarboxyethyl)-AMP = fumarate + AMP. The catalysed reaction is (2S)-2-[5-amino-1-(5-phospho-beta-D-ribosyl)imidazole-4-carboxamido]succinate = 5-amino-1-(5-phospho-beta-D-ribosyl)imidazole-4-carboxamide + fumarate. The protein operates within purine metabolism; AMP biosynthesis via de novo pathway; AMP from IMP: step 2/2. Its pathway is purine metabolism; IMP biosynthesis via de novo pathway; 5-amino-1-(5-phospho-D-ribosyl)imidazole-4-carboxamide from 5-amino-1-(5-phospho-D-ribosyl)imidazole-4-carboxylate: step 2/2. In terms of biological role, catalyzes two reactions in de novo purine nucleotide biosynthesis. Catalyzes the breakdown of 5-aminoimidazole- (N-succinylocarboxamide) ribotide (SAICAR or 2-[5-amino-1-(5-phospho-beta-D-ribosyl)imidazole-4-carboxamido]succinate) to 5-aminoimidazole-4-carboxamide ribotide (AICAR or 5-amino-1-(5-phospho-beta-D-ribosyl)imidazole-4-carboxamide) and fumarate, and of adenylosuccinate (ADS or N(6)-(1,2-dicarboxyethyl)-AMP) to adenosine monophosphate (AMP) and fumarate. This chain is Adenylosuccinate lyase (purB), found in Pyrococcus abyssi (strain GE5 / Orsay).